We begin with the raw amino-acid sequence, 285 residues long: Ribosomal RNA small subunit methyltransferase A (285 aa).

The S-adenosyl-L-methionine site is built by asparagine 30, leucine 32, glycine 57, glutamate 78, aspartate 101, and asparagine 121.

Belongs to the class I-like SAM-binding methyltransferase superfamily. rRNA adenine N(6)-methyltransferase family. RsmA subfamily.

The protein localises to the cytoplasm. The enzyme catalyses adenosine(1518)/adenosine(1519) in 16S rRNA + 4 S-adenosyl-L-methionine = N(6)-dimethyladenosine(1518)/N(6)-dimethyladenosine(1519) in 16S rRNA + 4 S-adenosyl-L-homocysteine + 4 H(+). Specifically dimethylates two adjacent adenosines (A1518 and A1519) in the loop of a conserved hairpin near the 3'-end of 16S rRNA in the 30S particle. May play a critical role in biogenesis of 30S subunits. This Treponema pallidum (strain Nichols) protein is Ribosomal RNA small subunit methyltransferase A.